We begin with the raw amino-acid sequence, 226 residues long: LexA repressor (226 aa).

Positions 42 to 62 form a DNA-binding region, H-T-H motif; sequence MREIGDAVGLASLSSVTHQLN. Catalysis depends on for autocatalytic cleavage activity residues S150 and K187.

The protein belongs to the peptidase S24 family. In terms of assembly, homodimer.

It carries out the reaction Hydrolysis of Ala-|-Gly bond in repressor LexA.. In terms of biological role, represses a number of genes involved in the response to DNA damage (SOS response), including recA and lexA. In the presence of single-stranded DNA, RecA interacts with LexA causing an autocatalytic cleavage which disrupts the DNA-binding part of LexA, leading to derepression of the SOS regulon and eventually DNA repair. The protein is LexA repressor of Clavibacter sepedonicus (Clavibacter michiganensis subsp. sepedonicus).